The chain runs to 84 residues: CDC42 small effector protein 2-A (84 aa).

Residues Cys-10 and Cys-11 are each lipidated (S-palmitoyl cysteine). Residues 29-42 enclose the CRIB domain; it reads IGEPTNFVHTAHVG.

This sequence belongs to the CDC42SE/SPEC family.

Its subcellular location is the cytoplasm. It is found in the cytoskeleton. It localises to the cell membrane. Probably involved in the organization of the actin cytoskeleton by acting downstream of CDC42, inducing actin filament assembly. The sequence is that of CDC42 small effector protein 2-A (cdc42se2-a) from Xenopus laevis (African clawed frog).